The chain runs to 735 residues: MLVHLFRVGIRGGPFPGRLLPPLRFQTFSAVRNTWRNGKTGQLHKAEGEYSDGYRSSSLLRAVAHLRSQLWAHLPRAPLAPRWSPSAWCWVGGALLGPMVLSKHPHLCLVALCEAEEAPPASSTPHVVGSRFNWKLFWQFLHPHLLVLGVAVVLALGAALVNVQIPLLLGQLVEVVAKYTRDHVGSFMTESQNLSTHLLILYGVQGLLTFGYLVLLSHVGERMAVDMRRALFSSLLRQDITFFDANKTGQLVSRLTTDVQEFKSSFKLVISQGLRSCTQVAGCLVSLSMLSTRLTLLLMVATPALMGVGTLMGSGLRKLSRQCQEQIARAMGVADEALGNVRTVRAFAMEQREEERYGAELEACRCRAEELGRGIALFQGLSNIAFNCMVLGTLFIGGSLVAGQQLTGGDLMSFLVASQTVQRSMANLSVLFGQVVRGLSAGARVFEYMALNPCIPLSGGCCVPKEQLRGSVTFQNVCFSYPCRPGFEVLKDFTLTLPPGKIVALVGQSGGGKTTVASLLERFYDPTAGVVMLDGRDLRTLDPSWLRGQVVGFISQEPVLFGTTIMENIRFGKLEASDEEVYTAAREANAHEFITSFPEGYNTVVGERGTTLSGGQKQRLAIARALIKQPTVLILDEATSALDAESERVVQEALDRASAGRTVLVIAHRLSTVRGAHCIVVMADGRVWEAGTHEELLKKGGLYAELIRRQALDAPRTAAPPPKKPEGPRSHQHKS.

A mitochondrion-targeting transit peptide spans 1–25 (MLVHLFRVGIRGGPFPGRLLPPLRF). The Mitochondrial matrix portion of the chain corresponds to 26 to 144 (QTFSAVRNTW…KLFWQFLHPH (119 aa)). A helical membrane pass occupies residues 145 to 165 (LLVLGVAVVLALGAALVNVQI). The ABC transmembrane type-1 domain maps to 150 to 437 (VAVVLALGAA…LSVLFGQVVR (288 aa)). Residues 166-195 (PLLLGQLVEVVAKYTRDHVGSFMTESQNLS) are Mitochondrial intermembrane-facing. A helical membrane pass occupies residues 196 to 216 (THLLILYGVQGLLTFGYLVLL). At 217-295 (SHVGERMAVD…SLSMLSTRLT (79 aa)) the chain is on the mitochondrial matrix side. A helical transmembrane segment spans residues 296-316 (LLLMVATPALMGVGTLMGSGL). Residues 317 to 735 (RKLSRQCQEQ…EGPRSHQHKS (419 aa)) are Mitochondrial intermembrane-facing. The 238-residue stretch at 472 to 709 (VTFQNVCFSY…GGLYAELIRR (238 aa)) folds into the ABC transporter domain. An ATP-binding site is contributed by 507–514 (GQSGGGKT). The interval 712 to 735 (LDAPRTAAPPPKKPEGPRSHQHKS) is disordered.

The protein belongs to the ABC transporter superfamily. ABCB family. Multidrug resistance exporter (TC 3.A.1.201) subfamily. In terms of assembly, the mitochondrial potassium channel (mitoK(ATP)) is composed of 4 subunits of CCDC51/MITOK and 4 subunits of ABCB8/MITOSUR. Interacts with C10orf88/PAAT. Interacts with NRP1; NRP1 regulates ABCB8/MITOSUR protein levels in mitochondria. As to expression, ubiquitous.

The protein resides in the mitochondrion inner membrane. Channel activity inhibited by ATP via ABCB8/MITOSUR subunit. Functionally, ATP-binding subunit of the mitochondrial ATP-gated potassium channel (mitoK(ATP)). Together with pore-forming subunit CCDC51/MITOK of the mitoK(ATP) channel, mediates ATP-dependent potassium currents across the mitochondrial inner membrane. An increase in ATP intracellular levels closes the channel, inhibiting K(+) transport, whereas a decrease in ATP levels enhances K(+) uptake in the mitochondrial matrix. Plays a role in mitochondrial iron transport. Required for maintenance of normal cardiac function, possibly by influencing mitochondrial iron export and regulating the maturation of cytosolic iron sulfur cluster-containing enzymes. This Homo sapiens (Human) protein is Mitochondrial potassium channel ATP-binding subunit.